The primary structure comprises 669 residues: Matrix metalloproteinase-15 (669 aa).

Positions 1 to 41 form a signal peptide, or 45; sequence MGSDPSAPGRPGWTGSLLGDREEAARPRLLPLLLVLLGCLG. Positions 42-131 are excised as a propeptide; it reads LGVAAEDAEV…KANLRRRRKR (90 aa). Residues 109 to 116 carry the Cysteine switch motif; that stretch reads PRCGVPDQ. Cysteine 111 contributes to the Zn(2+) binding site. Residues 132-625 are Extracellular-facing; the sequence is YALTGRKWNN…QMEEVARTVN (494 aa). A glycan (N-linked (GlcNAc...) asparagine) is linked at asparagine 150. Histidine 259 lines the Zn(2+) pocket. Residue glutamate 260 is part of the active site. The Zn(2+) site is built by histidine 263 and histidine 269. Positions 300–370 are disordered; that stretch reads QQLYGTPDGQ…RPDQYGPNIC (71 aa). The span at 305–322 shows a compositional bias: low complexity; sequence TPDGQPQPTQPLPTVTPR. A compositionally biased stretch (pro residues) spans 333 to 342; it reads RPPQPPPPGG. Hemopexin repeat units lie at residues 367-415, 416-461, 463-511, and 512-559; these read PNIC…WRGL, PGDI…GLGI, YDRI…QGIP, and ASPK…FMGC. Cysteine 370 and cysteine 559 are joined by a disulfide. A disordered region spans residues 574–593; the sequence is RPPFNPHGGAEPGADSAEGD. Serine 589 carries the post-translational modification Phosphoserine. The helical transmembrane segment at 626–646 threads the bilayer; the sequence is VVMVLVPLLLLLCVLGLTYAL. The Cytoplasmic portion of the chain corresponds to 647–669; it reads VQMQRKGAPRVLLYCKRSLQEWV.

This sequence belongs to the peptidase M10A family. It depends on Zn(2+) as a cofactor. Ca(2+) is required as a cofactor. Post-translationally, the precursor is cleaved by a furin endopeptidase. Appeared to be synthesized preferentially in liver, placenta, testis, colon and intestine. Substantial amounts are also detected in pancreas, kidney, lung, heart and skeletal muscle.

It is found in the membrane. Functionally, endopeptidase that degrades various components of the extracellular matrix. May activate progelatinase A. This Homo sapiens (Human) protein is Matrix metalloproteinase-15 (MMP15).